Consider the following 29-residue polypeptide: Cyclotide vibi-C (29 aa).

Positions Gly-1–Asn-29 form a cross-link, cyclopeptide (Gly-Asn). 3 disulfides stabilise this stretch: Cys-5/Cys-19, Cys-9/Cys-21, and Cys-14/Cys-26.

Post-translationally, this is a cyclic peptide.

Probably participates in a plant defense mechanism. This chain is Cyclotide vibi-C, found in Viola biflora (Yellow wood violet).